Reading from the N-terminus, the 226-residue chain is Exosome complex component rrp46 (226 aa).

The interval 205–226 (NESDGHENEKNPKEDVEMDVVA) is disordered. Residues 207 to 219 (SDGHENEKNPKED) are compositionally biased toward basic and acidic residues.

The protein belongs to the RNase PH family. As to quaternary structure, component of the RNA exosome complex. Specifically part of the catalytically inactive RNA exosome core complex (Exo-9) which may associate with the catalytic subunits rrp6 and dis3 in cytoplasmic- and nuclear-specific RNA exosome complex forms. Exo-9 is formed by a hexameric base ring of RNase PH domain-containing subunits and a cap ring consisting of csl4, rrp4 and rrp40.

The protein resides in the cytoplasm. It is found in the nucleus. It localises to the nucleolus. Non-catalytic component of the RNA exosome complex which has 3'-&gt;5' exoribonuclease activity and participates in a multitude of cellular RNA processing and degradation events. In the nucleus, the RNA exosome complex is involved in proper maturation of stable RNA species such as rRNA, snRNA and snoRNA, in the elimination of RNA processing by-products and non-coding 'pervasive' transcripts, such as antisense RNA species and cryptic unstable transcripts (CUTs), and of mRNAs with processing defects, thereby limiting or excluding their export to the cytoplasm. In the cytoplasm, the RNA exosome complex is involved in general mRNA turnover and in RNA surveillance pathways, preventing translation of aberrant mRNAs. The catalytic inactive RNA exosome core complex of 9 subunits (Exo-9) is proposed to play a pivotal role in the binding and presentation of RNA for ribonucleolysis, and to serve as a scaffold for the association with catalytic subunits and accessory proteins or complexes. ski6 is part of the hexameric ring of RNase PH domain-containing subunits proposed to form a central channel which threads RNA substrates for degradation. This is Exosome complex component rrp46 (rrp46) from Schizosaccharomyces pombe (strain 972 / ATCC 24843) (Fission yeast).